The chain runs to 137 residues: Large ribosomal subunit protein uL13 (137 aa).

The protein belongs to the universal ribosomal protein uL13 family. Part of the 50S ribosomal subunit.

This protein is one of the early assembly proteins of the 50S ribosomal subunit, although it is not seen to bind rRNA by itself. It is important during the early stages of 50S assembly. This Methanocaldococcus jannaschii (strain ATCC 43067 / DSM 2661 / JAL-1 / JCM 10045 / NBRC 100440) (Methanococcus jannaschii) protein is Large ribosomal subunit protein uL13.